We begin with the raw amino-acid sequence, 111 residues long: Putative lipid-binding protein AIR1 (111 aa).

A signal peptide spans 1–23; it reads MAPRTPLALFVSLNLLFFTYTSA. 3 disulfides stabilise this stretch: cysteine 28/cysteine 58, cysteine 38/cysteine 57, and cysteine 74/cysteine 110.

It belongs to the plant LTP family. PEARLI1 subfamily.

The protein resides in the secreted. This Arabidopsis thaliana (Mouse-ear cress) protein is Putative lipid-binding protein AIR1 (AIR1).